The sequence spans 367 residues: Ganglioside-induced differentiation-associated protein 1-like 1 (367 aa).

A GST N-terminal domain is found at 45–126 (ESLVLYHWTQ…YVERTFTGEH (82 aa)). A GST C-terminal domain is found at 174 to 341 (PKYATAEIRR…RLVKRKPPSF (168 aa)).

The protein belongs to the GST superfamily.

The protein is Ganglioside-induced differentiation-associated protein 1-like 1 (GDAP1L1) of Homo sapiens (Human).